A 184-amino-acid chain; its full sequence is Inorganic pyrophosphatase (184 aa).

The substrate site is built by lysine 19, arginine 33, and tyrosine 45. Mg(2+) is bound by residues aspartate 55, aspartate 60, and aspartate 92. Residue tyrosine 129 participates in substrate binding.

It belongs to the PPase family. Homohexamer. Requires Mg(2+) as cofactor.

The protein resides in the cytoplasm. It catalyses the reaction diphosphate + H2O = 2 phosphate + H(+). Functionally, catalyzes the hydrolysis of inorganic pyrophosphate (PPi) forming two phosphate ions. The sequence is that of Inorganic pyrophosphatase from Mycoplasma pneumoniae (strain ATCC 29342 / M129 / Subtype 1) (Mycoplasmoides pneumoniae).